The primary structure comprises 116 residues: MAMKIRLARGGSKKRPHYSIVASDSRMPRDGRFLEKLGTYNPLLAKDSEDRIKMNLERVQYWLAQGAQPTDRVARFLEAAGLKEKAVRNNPKAAVPGKRMAELAKKKADRAAASAE.

Positions 88–116 (RNNPKAAVPGKRMAELAKKKADRAAASAE) are disordered. Over residues 99 to 110 (RMAELAKKKADR) the composition is skewed to basic and acidic residues.

This sequence belongs to the bacterial ribosomal protein bS16 family.

In Cereibacter sphaeroides (strain ATCC 17029 / ATH 2.4.9) (Rhodobacter sphaeroides), this protein is Small ribosomal subunit protein bS16.